Reading from the N-terminus, the 211-residue chain is FMN-dependent NADH:quinone oxidoreductase 2 (211 aa).

102–105 lines the FMN pocket; that stretch reads MWNF.

The protein belongs to the azoreductase type 1 family. Homodimer. The cofactor is FMN.

The catalysed reaction is 2 a quinone + NADH + H(+) = 2 a 1,4-benzosemiquinone + NAD(+). It catalyses the reaction N,N-dimethyl-1,4-phenylenediamine + anthranilate + 2 NAD(+) = 2-(4-dimethylaminophenyl)diazenylbenzoate + 2 NADH + 2 H(+). In terms of biological role, quinone reductase that provides resistance to thiol-specific stress caused by electrophilic quinones. Functionally, also exhibits azoreductase activity. Catalyzes the reductive cleavage of the azo bond in aromatic azo compounds to the corresponding amines. This is FMN-dependent NADH:quinone oxidoreductase 2 from Bacillus thuringiensis subsp. konkukian (strain 97-27).